We begin with the raw amino-acid sequence, 214 residues long: UPF0502 protein Acid345_3645 (214 aa).

It belongs to the UPF0502 family.

The protein is UPF0502 protein Acid345_3645 of Koribacter versatilis (strain Ellin345).